Here is a 42-residue protein sequence, read N- to C-terminus: Pelovaterin (42 aa).

Intrachain disulfides connect cysteine 8-cysteine 38, cysteine 16-cysteine 32, and cysteine 24-cysteine 39.

The protein resides in the secreted. It is found in the extracellular space. Its subcellular location is the extracellular matrix. In terms of biological role, induces the nucleation and stabilization of vaterite, one of the crystalline polymorphs of calcium carbonate. Exhibits strong antimicrobial activity against Pseudomonas aeruginosa and Proteus vulgaris. This Pelodiscus sinensis (Chinese softshell turtle) protein is Pelovaterin.